Consider the following 330-residue polypeptide: Aspartate--ammonia ligase (330 aa).

Belongs to the class-II aminoacyl-tRNA synthetase family. AsnA subfamily.

The protein resides in the cytoplasm. It carries out the reaction L-aspartate + NH4(+) + ATP = L-asparagine + AMP + diphosphate + H(+). It participates in amino-acid biosynthesis; L-asparagine biosynthesis; L-asparagine from L-aspartate (ammonia route): step 1/1. The sequence is that of Aspartate--ammonia ligase from Streptococcus pyogenes serotype M2 (strain MGAS10270).